A 138-amino-acid chain; its full sequence is Endoribonuclease YbeY (138 aa).

Zn(2+) is bound by residues His106, His110, and Asp116.

It belongs to the endoribonuclease YbeY family. Requires Zn(2+) as cofactor.

It is found in the cytoplasm. In terms of biological role, single strand-specific metallo-endoribonuclease involved in late-stage 70S ribosome quality control and in maturation of the 3' terminus of the 16S rRNA. The protein is Endoribonuclease YbeY of Phocaeicola vulgatus (strain ATCC 8482 / DSM 1447 / JCM 5826 / CCUG 4940 / NBRC 14291 / NCTC 11154) (Bacteroides vulgatus).